Reading from the N-terminus, the 377-residue chain is Phosphoserine aminotransferase (377 aa).

Arg43 serves as a coordination point for L-glutamate. Residues Trp105, Thr164, Asp189, and Gln212 each coordinate pyridoxal 5'-phosphate. Position 213 is an N6-(pyridoxal phosphate)lysine (Lys213). Residue 254–255 (NT) participates in pyridoxal 5'-phosphate binding.

It belongs to the class-V pyridoxal-phosphate-dependent aminotransferase family. SerC subfamily. As to quaternary structure, homodimer. The cofactor is pyridoxal 5'-phosphate.

It is found in the cytoplasm. It carries out the reaction O-phospho-L-serine + 2-oxoglutarate = 3-phosphooxypyruvate + L-glutamate. The enzyme catalyses 4-(phosphooxy)-L-threonine + 2-oxoglutarate = (R)-3-hydroxy-2-oxo-4-phosphooxybutanoate + L-glutamate. Its pathway is amino-acid biosynthesis; L-serine biosynthesis; L-serine from 3-phospho-D-glycerate: step 2/3. The protein operates within cofactor biosynthesis; pyridoxine 5'-phosphate biosynthesis; pyridoxine 5'-phosphate from D-erythrose 4-phosphate: step 3/5. In terms of biological role, catalyzes the reversible conversion of 3-phosphohydroxypyruvate to phosphoserine and of 3-hydroxy-2-oxo-4-phosphonooxybutanoate to phosphohydroxythreonine. This is Phosphoserine aminotransferase from Bordetella bronchiseptica (strain ATCC BAA-588 / NCTC 13252 / RB50) (Alcaligenes bronchisepticus).